A 279-amino-acid polypeptide reads, in one-letter code: MQKYLEKANVLIEALPYIRKFNSKIILIKYGGSAMENEELKHCVMQDIALLKLVGLKPIIVHGGGKDISAMCEKLGVKSEFKNGLRVSDKATTEVASMVLNHINKNLVHSLQNLGVKAIGLCGKDGALLECVKKDENLAFVGTIQKVNSKILEELLEKDFLPIIAPIGMDEDFNTYNINADDAACAIAKALRAEKLAFLTDTAGLYEDFNDKNSLISKISLEQAKILAPKIEGGMHVKLKSCIDACENGVKKVHILDGRVKHSLLLEFFTDEGIGTLVG.

Substrate is bound by residues 64 to 65, Arg-86, and Asn-177; that span reads GG.

This sequence belongs to the acetylglutamate kinase family. ArgB subfamily.

The protein localises to the cytoplasm. It carries out the reaction N-acetyl-L-glutamate + ATP = N-acetyl-L-glutamyl 5-phosphate + ADP. The protein operates within amino-acid biosynthesis; L-arginine biosynthesis; N(2)-acetyl-L-ornithine from L-glutamate: step 2/4. Functionally, catalyzes the ATP-dependent phosphorylation of N-acetyl-L-glutamate. The chain is Acetylglutamate kinase from Campylobacter jejuni subsp. doylei (strain ATCC BAA-1458 / RM4099 / 269.97).